The sequence spans 358 residues: 1-deoxy-D-xylulose 5-phosphate reductoisomerase (358 aa).

Residues threonine 7, glycine 8, serine 9, isoleucine 10, glycine 31, asparagine 33, and asparagine 114 each coordinate NADPH. Residue lysine 115 participates in 1-deoxy-D-xylulose 5-phosphate binding. Glutamate 116 contacts NADPH. Aspartate 134 contributes to the Mn(2+) binding site. The 1-deoxy-D-xylulose 5-phosphate site is built by serine 135, glutamate 136, serine 157, and histidine 180. Glutamate 136 serves as a coordination point for Mn(2+). Glycine 186 lines the NADPH pocket. 1-deoxy-D-xylulose 5-phosphate is bound by residues serine 193, asparagine 198, lysine 199, and glutamate 202. Mn(2+) is bound at residue glutamate 202.

This sequence belongs to the DXR family. Mg(2+) serves as cofactor. Mn(2+) is required as a cofactor.

It carries out the reaction 2-C-methyl-D-erythritol 4-phosphate + NADP(+) = 1-deoxy-D-xylulose 5-phosphate + NADPH + H(+). Its pathway is isoprenoid biosynthesis; isopentenyl diphosphate biosynthesis via DXP pathway; isopentenyl diphosphate from 1-deoxy-D-xylulose 5-phosphate: step 1/6. Its function is as follows. Catalyzes the NADPH-dependent rearrangement and reduction of 1-deoxy-D-xylulose-5-phosphate (DXP) to 2-C-methyl-D-erythritol 4-phosphate (MEP). The polypeptide is 1-deoxy-D-xylulose 5-phosphate reductoisomerase (Wolinella succinogenes (strain ATCC 29543 / DSM 1740 / CCUG 13145 / JCM 31913 / LMG 7466 / NCTC 11488 / FDC 602W) (Vibrio succinogenes)).